Here is a 134-residue protein sequence, read N- to C-terminus: Arginine decarboxylase proenzyme (134 aa).

Ser-82 functions as the Schiff-base intermediate with substrate; via pyruvic acid in the catalytic mechanism. Position 82 is a pyruvic acid (Ser); by autocatalysis (Ser-82). His-87 (proton acceptor; for processing activity) is an active-site residue. Cys-102 serves as the catalytic Proton donor; for catalytic activity.

It belongs to the prokaryotic AdoMetDC family. Type 1 subfamily. In terms of assembly, heterooctamer of four alpha and four beta chains arranged as a tetramer of alpha/beta heterodimers. It depends on pyruvate as a cofactor. Post-translationally, is synthesized initially as an inactive proenzyme. Formation of the active enzyme involves a self-maturation process in which the active site pyruvoyl group is generated from an internal serine residue via an autocatalytic post-translational modification. Two non-identical subunits are generated from the proenzyme in this reaction, and the pyruvate is formed at the N-terminus of the alpha chain, which is derived from the carboxyl end of the proenzyme. The post-translation cleavage follows an unusual pathway, termed non-hydrolytic serinolysis, in which the side chain hydroxyl group of the serine supplies its oxygen atom to form the C-terminus of the beta chain, while the remainder of the serine residue undergoes an oxidative deamination to produce ammonia and the pyruvoyl group blocking the N-terminus of the alpha chain.

The catalysed reaction is L-arginine + H(+) = agmatine + CO2. It functions in the pathway amine and polyamine biosynthesis; agmatine biosynthesis; agmatine from L-arginine: step 1/1. Its function is as follows. Specifically catalyzes the decarboxylation of L-arginine to agmatine. Has no S-adenosylmethionine decarboxylase (AdoMetDC) activity. The protein is Arginine decarboxylase proenzyme of Saccharolobus islandicus (strain M.16.4 / Kamchatka #3) (Sulfolobus islandicus).